Here is a 331-residue protein sequence, read N- to C-terminus: 2-oxoglutarate-dependent dioxygenase (331 aa).

The region spanning 186 to 292 (PACPLRLLHY…RYSVVFFMDG (107 aa)) is the Fe2OG dioxygenase domain. H214, D216, and H272 together coordinate Fe cation. R283 contributes to the 2-oxoglutarate binding site.

It belongs to the iron/ascorbate-dependent oxidoreductase family. Fe(2+) is required as a cofactor.

The protein operates within mycotoxin biosynthesis. Functionally, 2-oxoglutarate-dependent dioxygenase; part of the gene cluster that mediates the biosynthesis of the selective antifungal agent ascochitine, an o-quinone methide that plays a possible protective role against other microbial competitors in nature and is considered to be important for pathogenicity of legume-associated Didymella species. The pathway probably begins with the synthesis of a keto-aldehyde intermediate by the ascochitine non-reducing polyketide synthase pksAC from successive condensations of 4 malonyl-CoA units, presumably with a simple acetyl-CoA starter unit. Release of the keto-aldehyde intermediate is consistent with the presence of the C-terminal reductive release domain. The HR-PKS (orf7) probably makes a diketide starter unit which is passed to the non-reducing polyketide synthase pksAC for further extension, producing ascochital and ascochitine. The aldehyde dehydrogenase (orf1), the 2-oxoglutarate-dependent dioxygenase (orf3) and the dehydrogenase (orf9) are probably involved in subsequent oxidations of methyl groups to the carboxylic acid of the heterocyclic ring. The ascochitine gene cluster also includes a gene encoding a short peptide with a cupin domain (orf2) that is often found in secondary metabolite gene clusters and which function has still to be determined. This chain is 2-oxoglutarate-dependent dioxygenase, found in Didymella fabae (Leaf and pod spot disease fungus).